The chain runs to 512 residues: Maturase K (512 aa).

This sequence belongs to the intron maturase 2 family. MatK subfamily.

It localises to the plastid. The protein localises to the chloroplast. Usually encoded in the trnK tRNA gene intron. Probably assists in splicing its own and other chloroplast group II introns. This chain is Maturase K, found in Ginkgo biloba (Ginkgo).